A 636-amino-acid polypeptide reads, in one-letter code: Probable Xaa-Pro aminopeptidase P (636 aa).

Residues D414, D425, E523, and E537 each contribute to the Mn(2+) site.

It belongs to the peptidase M24B family. Requires Mn(2+) as cofactor.

The enzyme catalyses Release of any N-terminal amino acid, including proline, that is linked to proline, even from a dipeptide or tripeptide.. Its function is as follows. Catalyzes the removal of a penultimate prolyl residue from the N-termini of peptides. The protein is Probable Xaa-Pro aminopeptidase P (AMPP) of Ajellomyces capsulatus (strain H143) (Darling's disease fungus).